A 1060-amino-acid chain; its full sequence is Carbamoyl phosphate synthase large chain (1060 aa).

Residues 1–400 (MPRDESINKV…SLNKAIRSLD (400 aa)) form a carboxyphosphate synthetic domain region. ATP contacts are provided by Arg127, Arg167, Gly173, Gly174, Gln206, Val208, Glu213, Gly240, Ile241, His242, Gln283, and Glu297. An ATP-grasp 1 domain is found at 131-326 (DSFMKKLNEP…IAKIAAKIAV (196 aa)). Mg(2+) is bound by residues Gln283, Glu297, and Asn299. Residues Gln283, Glu297, and Asn299 each coordinate Mn(2+). The segment at 401 to 539 (IGADGFTETP…YGCYDLEDEV (139 aa)) is oligomerization domain. The tract at residues 540–926 (EVSDRRKVLI…YKSQLSASMD (387 aa)) is carbamoyl phosphate synthetic domain. An ATP-grasp 2 domain is found at 664-858 (TEVLNKLGIP…LAKMAARLMM (195 aa)). ATP is bound by residues Arg700, Lys739, Leu741, Glu746, Gly771, Val772, His773, Ser774, Gln814, and Glu829. Residues Gln814, Glu829, and Asn831 each coordinate Mg(2+). Residues Gln814, Glu829, and Asn831 each contribute to the Mn(2+) site. Positions 925–1060 (MDLLNEGKVF…VKSLDEYHGM (136 aa)) constitute an MGS-like domain. The segment at 927 to 1060 (LLNEGKVFIS…VKSLDEYHGM (134 aa)) is allosteric domain.

It belongs to the CarB family. In terms of assembly, composed of two chains; the small (or glutamine) chain promotes the hydrolysis of glutamine to ammonia, which is used by the large (or ammonia) chain to synthesize carbamoyl phosphate. Tetramer of heterodimers (alpha,beta)4. Mg(2+) is required as a cofactor. Requires Mn(2+) as cofactor.

It carries out the reaction hydrogencarbonate + L-glutamine + 2 ATP + H2O = carbamoyl phosphate + L-glutamate + 2 ADP + phosphate + 2 H(+). It catalyses the reaction hydrogencarbonate + NH4(+) + 2 ATP = carbamoyl phosphate + 2 ADP + phosphate + 2 H(+). Its pathway is amino-acid biosynthesis; L-arginine biosynthesis; carbamoyl phosphate from bicarbonate: step 1/1. The protein operates within pyrimidine metabolism; UMP biosynthesis via de novo pathway; (S)-dihydroorotate from bicarbonate: step 1/3. Large subunit of the glutamine-dependent carbamoyl phosphate synthetase (CPSase). CPSase catalyzes the formation of carbamoyl phosphate from the ammonia moiety of glutamine, carbonate, and phosphate donated by ATP, constituting the first step of 2 biosynthetic pathways, one leading to arginine and/or urea and the other to pyrimidine nucleotides. The large subunit (synthetase) binds the substrates ammonia (free or transferred from glutamine from the small subunit), hydrogencarbonate and ATP and carries out an ATP-coupled ligase reaction, activating hydrogencarbonate by forming carboxy phosphate which reacts with ammonia to form carbamoyl phosphate. In Methanothermobacter thermautotrophicus (strain ATCC 29096 / DSM 1053 / JCM 10044 / NBRC 100330 / Delta H) (Methanobacterium thermoautotrophicum), this protein is Carbamoyl phosphate synthase large chain.